Reading from the N-terminus, the 523-residue chain is 2-isopropylmalate synthase (523 aa).

The Pyruvate carboxyltransferase domain maps to 5–267 (VIIFDTTLRD…ETGINAKEIH (263 aa)). Asp-14, His-202, His-204, and Asn-238 together coordinate Mn(2+). The segment at 392–523 (QLKQLVVHSD…QQKARSLGGV (132 aa)) is regulatory domain.

Belongs to the alpha-IPM synthase/homocitrate synthase family. LeuA type 1 subfamily. In terms of assembly, homodimer. The cofactor is Mn(2+).

It localises to the cytoplasm. The enzyme catalyses 3-methyl-2-oxobutanoate + acetyl-CoA + H2O = (2S)-2-isopropylmalate + CoA + H(+). Its pathway is amino-acid biosynthesis; L-leucine biosynthesis; L-leucine from 3-methyl-2-oxobutanoate: step 1/4. Its function is as follows. Catalyzes the condensation of the acetyl group of acetyl-CoA with 3-methyl-2-oxobutanoate (2-ketoisovalerate) to form 3-carboxy-3-hydroxy-4-methylpentanoate (2-isopropylmalate). This chain is 2-isopropylmalate synthase, found in Shewanella woodyi (strain ATCC 51908 / MS32).